The following is a 349-amino-acid chain: Sterol-4-alpha-carboxylate 3-dehydrogenase ERG26, decarboxylating (349 aa).

Residues 11–17, 62–63, and 84–86 each bind NADP(+); these read GGSGFLG, DL, and CAS. Residues S124 and Y151 each contribute to the substrate site. NADP(+) is bound by residues Y151, K155, and 179-182; that span reads PAGI. K155 serves as the catalytic Proton donor.

The protein belongs to the 3-beta-HSD family. Heterotetramer of ERG25, ERG26, ERG27 and ERG28. ERG28 acts as a scaffold to tether ERG27 and other 4,4-demethylation-related enzymes, forming a demethylation enzyme complex, in the endoplasmic reticulum.

Its subcellular location is the endoplasmic reticulum membrane. The enzyme catalyses 4beta-methylzymosterol-4alpha-carboxylate + NADP(+) = 3-dehydro-4-methylzymosterol + CO2 + NADPH. It participates in steroid biosynthesis; zymosterol biosynthesis; zymosterol from lanosterol: step 4/6. With respect to regulation, inhibited by FR171456, a natural product with broad antifungal activity. In terms of biological role, sterol-4-alpha-carboxylate 3-dehydrogenase; part of the third module of ergosterol biosynthesis pathway that includes the late steps of the pathway. ERG26 is a catalytic component of the C-4 demethylation complex that catalyzes the oxidative decarboxylation that results in a reduction of the 3-beta-hydroxy group at the C-3 carbon to an oxo group. The third module or late pathway involves the ergosterol synthesis itself through consecutive reactions that mainly occur in the endoplasmic reticulum (ER) membrane. Firstly, the squalene synthase ERG9 catalyzes the condensation of 2 farnesyl pyrophosphate moieties to form squalene, which is the precursor of all steroids. Squalene synthase is crucial for balancing the incorporation of farnesyl diphosphate (FPP) into sterol and nonsterol isoprene synthesis. Secondly, the squalene epoxidase ERG1 catalyzes the stereospecific oxidation of squalene to (S)-2,3-epoxysqualene, which is considered to be a rate-limiting enzyme in steroid biosynthesis. Then, the lanosterol synthase ERG7 catalyzes the cyclization of (S)-2,3 oxidosqualene to lanosterol, a reaction that forms the sterol core. In the next steps, lanosterol is transformed to zymosterol through a complex process involving various demethylation, reduction and desaturation reactions. The lanosterol 14-alpha-demethylase ERG11 (also known as CYP51) catalyzes C14-demethylation of lanosterol to produce 4,4'-dimethyl cholesta-8,14,24-triene-3-beta-ol, which is critical for ergosterol biosynthesis. The C-14 reductase ERG24 reduces the C14=C15 double bond of 4,4-dimethyl-cholesta-8,14,24-trienol to produce 4,4-dimethyl-cholesta-8,24-dienol. 4,4-dimethyl-cholesta-8,24-dienol is substrate of the C-4 demethylation complex ERG25-ERG26-ERG27 in which ERG25 catalyzes the three-step monooxygenation required for the demethylation of 4,4-dimethyl and 4alpha-methylsterols, ERG26 catalyzes the oxidative decarboxylation that results in a reduction of the 3-beta-hydroxy group at the C-3 carbon to an oxo group, and ERG27 is responsible for the reduction of the keto group on the C-3. ERG28 has a role as a scaffold to help anchor ERG25, ERG26 and ERG27 to the endoplasmic reticulum and ERG29 regulates the activity of the iron-containing C4-methylsterol oxidase ERG25. Then, the sterol 24-C-methyltransferase ERG6 catalyzes the methyl transfer from S-adenosyl-methionine to the C-24 of zymosterol to form fecosterol. The C-8 sterol isomerase ERG2 catalyzes the reaction which results in unsaturation at C-7 in the B ring of sterols and thus converts fecosterol to episterol. The sterol-C5-desaturase ERG3 then catalyzes the introduction of a C-5 double bond in the B ring to produce 5-dehydroepisterol. The C-22 sterol desaturase ERG5 further converts 5-dehydroepisterol into ergosta-5,7,22,24(28)-tetraen-3beta-ol by forming the C-22(23) double bond in the sterol side chain. Finally, ergosta-5,7,22,24(28)-tetraen-3beta-ol is substrate of the C-24(28) sterol reductase ERG4 to produce ergosterol. The protein is Sterol-4-alpha-carboxylate 3-dehydrogenase ERG26, decarboxylating of Saccharomyces cerevisiae (strain ATCC 204508 / S288c) (Baker's yeast).